The chain runs to 427 residues: Glutamate-1-semialdehyde 2,1-aminomutase (427 aa).

At Lys-265 the chain carries N6-(pyridoxal phosphate)lysine.

Belongs to the class-III pyridoxal-phosphate-dependent aminotransferase family. HemL subfamily. Homodimer. Pyridoxal 5'-phosphate serves as cofactor.

Its subcellular location is the cytoplasm. It carries out the reaction (S)-4-amino-5-oxopentanoate = 5-aminolevulinate. It participates in porphyrin-containing compound metabolism; protoporphyrin-IX biosynthesis; 5-aminolevulinate from L-glutamyl-tRNA(Glu): step 2/2. This Pasteurella multocida (strain Pm70) protein is Glutamate-1-semialdehyde 2,1-aminomutase.